The primary structure comprises 98 residues: Acylphosphatase (98 aa).

Residues 12–98 (TYYVRVRGVV…DKRFERFQQH (87 aa)) form the Acylphosphatase-like domain. Catalysis depends on residues R27 and N45.

It belongs to the acylphosphatase family.

The enzyme catalyses an acyl phosphate + H2O = a carboxylate + phosphate + H(+). This chain is Acylphosphatase (acyP), found in Burkholderia thailandensis (strain ATCC 700388 / DSM 13276 / CCUG 48851 / CIP 106301 / E264).